The chain runs to 400 residues: Argininosuccinate synthase (400 aa).

8–16 (AYSGGLDTS) serves as a coordination point for ATP. L-citrulline contacts are provided by tyrosine 86 and serine 91. Glycine 116 provides a ligand contact to ATP. 3 residues coordinate L-aspartate: threonine 118, asparagine 122, and aspartate 123. Asparagine 122 is an L-citrulline binding site. L-citrulline-binding residues include arginine 126, serine 175, serine 184, glutamate 260, and tyrosine 272.

Belongs to the argininosuccinate synthase family. Type 1 subfamily. In terms of assembly, homotetramer.

It is found in the cytoplasm. It catalyses the reaction L-citrulline + L-aspartate + ATP = 2-(N(omega)-L-arginino)succinate + AMP + diphosphate + H(+). It functions in the pathway amino-acid biosynthesis; L-arginine biosynthesis; L-arginine from L-ornithine and carbamoyl phosphate: step 2/3. This chain is Argininosuccinate synthase, found in Clostridium acetobutylicum (strain ATCC 824 / DSM 792 / JCM 1419 / IAM 19013 / LMG 5710 / NBRC 13948 / NRRL B-527 / VKM B-1787 / 2291 / W).